The primary structure comprises 58 residues: uncharacterized protein (58 aa).

This is an uncharacterized protein from Saccharomyces cerevisiae (strain ATCC 204508 / S288c) (Baker's yeast).